A 307-amino-acid polypeptide reads, in one-letter code: Low-salt glycan biosynthesis hexosyltransferase Agl10 (307 aa).

This sequence belongs to the glycosyltransferase 2 family.

The protein operates within protein modification; protein glycosylation. It participates in cell surface structure biogenesis; S-layer biogenesis. Functionally, hexosyltransferase involved in N-glycan biosynthetic pathway that takes place under low-salt conditions (1.75 M instead of 3.4 M). Participates in the formation of the tetrasaccharide present at 'Asn-532' of S-layer glycoprotein Csg, consisting of a sulfated hexose, 2 hexoses and rhamnose. Involved in the addition of final rhamnose (sugar 4) of the tetrasaccharide on the dolichol phosphate carrier. The chain is Low-salt glycan biosynthesis hexosyltransferase Agl10 (agl10) from Haloferax volcanii (strain ATCC 29605 / DSM 3757 / JCM 8879 / NBRC 14742 / NCIMB 2012 / VKM B-1768 / DS2) (Halobacterium volcanii).